Here is a 226-residue protein sequence, read N- to C-terminus: Urease accessory protein UreF (226 aa).

This sequence belongs to the UreF family. UreD, UreF and UreG form a complex that acts as a GTP-hydrolysis-dependent molecular chaperone, activating the urease apoprotein by helping to assemble the nickel containing metallocenter of UreC. The UreE protein probably delivers the nickel.

It localises to the cytoplasm. Required for maturation of urease via the functional incorporation of the urease nickel metallocenter. The chain is Urease accessory protein UreF from Burkholderia ambifaria (strain MC40-6).